A 565-amino-acid chain; its full sequence is DNA mismatch repair protein MutL (565 aa).

This sequence belongs to the DNA mismatch repair MutL/HexB family.

In terms of biological role, this protein is involved in the repair of mismatches in DNA. It is required for dam-dependent methyl-directed DNA mismatch repair. May act as a 'molecular matchmaker', a protein that promotes the formation of a stable complex between two or more DNA-binding proteins in an ATP-dependent manner without itself being part of a final effector complex. The sequence is that of DNA mismatch repair protein MutL from Desulforudis audaxviator (strain MP104C).